The sequence spans 78 residues: Short neurotoxin 342 (78 aa).

The first 21 residues, 1–21 (MKTLLLTLVVLTIVCLDLGYT), serve as a signal peptide directing secretion. Cystine bridges form between cysteine 24/cysteine 43, cysteine 38/cysteine 57, cysteine 59/cysteine 70, and cysteine 71/cysteine 76.

The protein belongs to the three-finger toxin family. Short-chain subfamily. Type I alpha-neurotoxin sub-subfamily. In terms of tissue distribution, expressed by the venom gland.

The protein resides in the secreted. Binds to muscle nicotinic acetylcholine receptor (nAChR) and inhibit acetylcholine from binding to the receptor, thereby impairing neuromuscular transmission. This is Short neurotoxin 342 from Drysdalia coronoides (White-lipped snake).